A 154-amino-acid polypeptide reads, in one-letter code: Phosphopantetheine adenylyltransferase (154 aa).

It belongs to the eukaryotic CoaD family.

It is found in the cytoplasm. The catalysed reaction is (R)-4'-phosphopantetheine + ATP + H(+) = 3'-dephospho-CoA + diphosphate. The protein operates within cofactor biosynthesis; coenzyme A biosynthesis. Functionally, reversibly transfers an adenylyl group from ATP to 4'-phosphopantetheine, yielding dephospho-CoA (dPCoA) and pyrophosphate. The polypeptide is Phosphopantetheine adenylyltransferase (Methanosarcina mazei (strain ATCC BAA-159 / DSM 3647 / Goe1 / Go1 / JCM 11833 / OCM 88) (Methanosarcina frisia)).